The sequence spans 169 residues: MATKVKSQAKLRFVSVEQVQSAIKEIGDLSREHTRLATEMNDKIGATSEHYAPKLKALKEEIEPLQKAVQEYCEANRDELTEFGKTKTANFVTGEVQWRQRPPSVAIRGAEAVMEFLQRMGFDRFIRTRQEINKEALLNEPEVAKGIAGVTIKQGLEDFVIKPFEQDAR.

It to phage Mu protein gam.

In terms of biological role, protects linear double-stranded DNA of Mu genome from exonuclease degradation. The protein is Mu-like prophage FluMu host-nuclease inhibitor protein gam of Haemophilus influenzae (strain ATCC 51907 / DSM 11121 / KW20 / Rd).